A 681-amino-acid polypeptide reads, in one-letter code: Potassium-transporting ATPase ATP-binding subunit (681 aa).

Helical transmembrane passes span 37 to 57 (MFVVEVGTFITLLATIFPTYF), 64 to 84 (VGYNALVTFILFVTVLFANFA), 218 to 238 (IALTTVLVSLTIIFIVVVMTL), and 255 to 275 (IALLVCLIPTTIGGLLSAIGI). The 4-aspartylphosphate intermediate role is filled by D306. Residues D343, E347, 375–382 (FSAETRMS), and K394 contribute to the ATP site. Mg(2+) contacts are provided by D517 and D521. The next 3 membrane-spanning stretches (helical) occupy residues 573-595 (ALTTFSIANDVAKYFAILPAIIS), 615-635 (AILSALIYNAIIIPILIPIAM), and 655-675 (IYGLGGLIAPFVGIKLIDMII).

It belongs to the cation transport ATPase (P-type) (TC 3.A.3) family. Type IA subfamily. The system is composed of three essential subunits: KdpA, KdpB and KdpC.

Its subcellular location is the cell membrane. It carries out the reaction K(+)(out) + ATP + H2O = K(+)(in) + ADP + phosphate + H(+). Functionally, part of the high-affinity ATP-driven potassium transport (or Kdp) system, which catalyzes the hydrolysis of ATP coupled with the electrogenic transport of potassium into the cytoplasm. This subunit is responsible for energy coupling to the transport system and for the release of the potassium ions to the cytoplasm. The chain is Potassium-transporting ATPase ATP-binding subunit from Caldanaerobacter subterraneus subsp. tengcongensis (strain DSM 15242 / JCM 11007 / NBRC 100824 / MB4) (Thermoanaerobacter tengcongensis).